A 286-amino-acid polypeptide reads, in one-letter code: 33 kDa chaperonin (286 aa).

Intrachain disulfides connect C225-C227 and C258-C261.

This sequence belongs to the HSP33 family. Post-translationally, under oxidizing conditions two disulfide bonds are formed involving the reactive cysteines. Under reducing conditions zinc is bound to the reactive cysteines and the protein is inactive.

The protein resides in the cytoplasm. In terms of biological role, redox regulated molecular chaperone. Protects both thermally unfolding and oxidatively damaged proteins from irreversible aggregation. Plays an important role in the bacterial defense system toward oxidative stress. In Shewanella sp. (strain ANA-3), this protein is 33 kDa chaperonin.